Consider the following 841-residue polypeptide: Translation initiation factor IF-2 (841 aa).

Basic and acidic residues-rich tracts occupy residues Met1–Lys12, Glu50–Lys92, Glu114–Ala170, Arg188–Arg202, and Lys213–Gly235. 2 disordered regions span residues Met1 to Val24 and Glu50 to Leu246. A tr-type G domain is found at Thr340–Thr510. Positions Gly349–Thr356 are G1. Gly349–Thr356 contacts GTP. Residues Gly374–His378 are G2. The interval Asp396 to Gly399 is G3. Residues Asp396–His400 and Asn450–Asp453 each bind GTP. Positions Asn450–Asp453 are G4. A G5 region spans residues Ser486–Lys488.

Belongs to the TRAFAC class translation factor GTPase superfamily. Classic translation factor GTPase family. IF-2 subfamily.

The protein resides in the cytoplasm. One of the essential components for the initiation of protein synthesis. Protects formylmethionyl-tRNA from spontaneous hydrolysis and promotes its binding to the 30S ribosomal subunits. Also involved in the hydrolysis of GTP during the formation of the 70S ribosomal complex. This chain is Translation initiation factor IF-2, found in Actinobacillus pleuropneumoniae serotype 3 (strain JL03).